Consider the following 1300-residue polypeptide: Phospholipid-transporting ATPase IK (1300 aa).

The span at 1 to 11 (MGTGPAQTPRS) shows a compositional bias: polar residues. Residues 1–98 (MGTGPAQTPR…SLGQREDLQD (98 aa)) are disordered. At 1 to 149 (MGTGPAQTPR…TAKYNFYSFL (149 aa)) the chain is on the cytoplasmic side. The segment covering 65–74 (RRHKAQPGRA) has biased composition (basic residues). A helical membrane pass occupies residues 150–171 (PLNLYEQFHRVSNLFFLIIIIL). Residues 172–177 (QSIPDI) lie on the Exoplasmic loop side of the membrane. Residues 178–197 (STLPWFSLSTPMVCLLFIRA) form a helical membrane-spanning segment. The Cytoplasmic portion of the chain corresponds to 198–381 (TRDLVDDMGR…TKLDLLMNKL (184 aa)). The chain crosses the membrane as a helical span at residues 382–403 (VVVIFISVVLVCLVLAFGFGFS). Residues 404–430 (VKEFKDHHYYLSGVHGSSVAAESFFVF) are Exoplasmic loop-facing. A helical membrane pass occupies residues 431 to 452 (WSFLILLSVTIPMSMFILSEFI). The Cytoplasmic portion of the chain corresponds to 453-995 (YLGNSVFIDW…GRWSYVRICK (543 aa)). The active-site 4-aspartylphosphate intermediate is the aspartate 495. ATP contacts are provided by aspartate 495, lysine 496, threonine 497, glutamate 596, phenylalanine 637, lysine 660, arginine 693, threonine 763, glycine 764, aspartate 765, arginine 913, and lysine 919. Aspartate 495 contributes to the Mg(2+) binding site. Mg(2+) is bound at residue threonine 497. Position 939 (aspartate 939) interacts with Mg(2+). The ATP site is built by asparagine 942 and aspartate 943. Residue aspartate 943 coordinates Mg(2+). A helical transmembrane segment spans residues 996-1016 (FLRYFFYKSMASMMVQVWFAC). The Exoplasmic loop segment spans residues 1017-1028 (YNGFTGQPLYEG). A helical transmembrane segment spans residues 1029–1048 (WFLALFNLLYSTLPVLYIGL). Topologically, residues 1049-1078 (FEQDVSAEQSLEKPELYVVGQKDELFNYWV) are cytoplasmic. The helical transmembrane segment at 1079–1100 (FVQAIAHGVTTSLVNFFMTLWI) threads the bilayer. Over 1101–1112 (SRDTAGPASFSD) the chain is Exoplasmic loop. The helical transmembrane segment at 1113–1135 (HQSFAVVVALSCLLSITMEVILI) threads the bilayer. Residues 1136-1141 (IKYWTA) are Cytoplasmic-facing. The chain crosses the membrane as a helical span at residues 1142 to 1162 (LCVATILLSLGFYAIMTTTTQ). Residues 1163-1182 (SFWLFRVSPTTFPFLYADLS) lie on the Exoplasmic loop side of the membrane. Residues 1183 to 1207 (VMSSPSILLVVLLSVSINTFPVLAL) traverse the membrane as a helical segment. Residues 1208 to 1300 (RVIFPALKEL…EAASSPKESQ (93 aa)) lie on the Cytoplasmic side of the membrane. Residues 1272–1300 (RGPGVSSDIASESLDPSDEEAASSPKESQ) are disordered.

It belongs to the cation transport ATPase (P-type) (TC 3.A.3) family. Type IV subfamily. It depends on Mg(2+) as a cofactor. In terms of tissue distribution, isoform 3 was only detected in testis.

Its subcellular location is the cytoplasmic vesicle. The protein localises to the secretory vesicle. It localises to the acrosome membrane. It is found in the endoplasmic reticulum membrane. The catalysed reaction is ATP + H2O + phospholipidSide 1 = ADP + phosphate + phospholipidSide 2.. It catalyses the reaction a 1,2-diacyl-sn-glycero-3-phospho-L-serine(out) + ATP + H2O = a 1,2-diacyl-sn-glycero-3-phospho-L-serine(in) + ADP + phosphate + H(+). P4-ATPase flippase which catalyzes the hydrolysis of ATP coupled to the transport of aminophospholipids from the outer to the inner leaflet of various membranes and ensures the maintenance of asymmetric distribution of phospholipids. Phospholipid translocation also seems to be implicated in vesicle formation and in uptake of lipid signaling molecules. May be responsible for the maintenance of asymmetric distribution of phosphatidylserine (PS) in spermatozoa membranes. Involved in acrosome reactions and binding of spermatozoa to zona pellucida. The sequence is that of Phospholipid-transporting ATPase IK from Homo sapiens (Human).